A 169-amino-acid chain; its full sequence is uncharacterized protein (169 aa).

The transit peptide at 1 to 91 (MFSSTFRRLA…NKEQYTVRCL (91 aa)) directs the protein to the mitochondrion. The tract at residues 54–76 (PQPKSPGSLPSSTRTAPNPNGEE) is disordered. A compositionally biased stretch (polar residues) spans 61–71 (SLPSSTRTAPN).

The protein localises to the mitochondrion. This is an uncharacterized protein from Trypanosoma brucei brucei (strain 927/4 GUTat10.1).